Here is a 139-residue protein sequence, read N- to C-terminus: Ribonuclease P/MRP protein subunit POP5 (139 aa).

This sequence belongs to the eukaryotic/archaeal RNase P protein component 2 family.

It localises to the nucleus. It catalyses the reaction Endonucleolytic cleavage of RNA, removing 5'-extranucleotides from tRNA precursor.. Its function is as follows. Component of ribonuclease P, a protein complex that generates mature tRNA molecules by cleaving their 5'-ends. Also a component of RNase MRP, which cleaves pre-rRNA sequences. The protein is Ribonuclease P/MRP protein subunit POP5 of Schizosaccharomyces pombe (strain 972 / ATCC 24843) (Fission yeast).